The primary structure comprises 327 residues: Ribonucleoside-diphosphate reductase small chain (327 aa).

Fe cation contacts are provided by Asp70, Glu101, and His104. Tyr108 is an active-site residue. 3 residues coordinate Fe cation: Glu164, Glu198, and His201.

Belongs to the ribonucleoside diphosphate reductase small chain family. As to quaternary structure, heterotetramer composed of a homodimer of the large subunit (R1) and a homodimer of the small subunit (R2). Larger multisubunit protein complex are also active, composed of (R1)n(R2)n. Requires Fe cation as cofactor.

It carries out the reaction a 2'-deoxyribonucleoside 5'-diphosphate + [thioredoxin]-disulfide + H2O = a ribonucleoside 5'-diphosphate + [thioredoxin]-dithiol. Functionally, ribonucleoside-diphosphate reductase holoenzyme provides the precursors necessary for viral DNA synthesis. Allows virus growth in non-dividing cells. Catalyzes the biosynthesis of deoxyribonucleotides from the corresponding ribonucleotides. This is Ribonucleoside-diphosphate reductase small chain from African swine fever virus (isolate Tick/Malawi/Lil 20-1/1983) (ASFV).